The primary structure comprises 250 residues: Hydroxyacylglutathione hydrolase (250 aa).

Zn(2+) is bound by residues His52, His54, Asp56, His57, His107, Asp128, and His166.

Belongs to the metallo-beta-lactamase superfamily. Glyoxalase II family. In terms of assembly, monomer. The cofactor is Zn(2+).

The enzyme catalyses an S-(2-hydroxyacyl)glutathione + H2O = a 2-hydroxy carboxylate + glutathione + H(+). Its pathway is secondary metabolite metabolism; methylglyoxal degradation; (R)-lactate from methylglyoxal: step 2/2. In terms of biological role, thiolesterase that catalyzes the hydrolysis of S-D-lactoyl-glutathione to form glutathione and D-lactic acid. This chain is Hydroxyacylglutathione hydrolase, found in Neisseria meningitidis serogroup A / serotype 4A (strain DSM 15465 / Z2491).